A 756-amino-acid polypeptide reads, in one-letter code: Nucleomorphin (756 aa).

Residues 1-10 (MDLDYSSDNS) are compositionally biased toward polar residues. Residues 1–113 (MDLDYSSDNS…SQSNEDLSSS (113 aa)) form a disordered region. 2 stretches are compositionally biased toward low complexity: residues 16 to 66 (NQNN…RPSS) and 75 to 94 (NNNN…NNNN). Over residues 95 to 113 (GATISHPPTSQSNEDLSSS) the composition is skewed to polar residues. The region spanning 124–216 (LNSNIFENLG…ELLGVENYLV (93 aa)) is the BRCT domain. Disordered stretches follow at residues 229 to 251 (NSSQ…INEQ), 272 to 298 (PSSL…LKSE), 359 to 403 (KIDL…NKNN), and 422 to 463 (TSST…LLNL). Composition is skewed to low complexity over residues 285–298 (LQTQ…LKSE), 364–401 (NNNN…NKNK), and 422–432 (TSSTSSTLSSS). The span at 448-459 (KSKKKFSQKKNH) shows a compositional bias: basic residues. A Nuclear localization signal motif is present at residues 464 to 480 (KKSYQDPEIIAHSRPRK). Positions 495–512 (ANYISNLDGFKYYARANK) are calmodulin binding. Residues 514-529 (SLNSNATTSGGNNRSI) show a composition bias toward polar residues. Residues 514–587 (SLNSNATTSG…SDEDDFDSDE (74 aa)) form a disordered region. Over residues 536-587 (YDDEEEDEEDEDEEDEEEDEEEEEEEEEEEEDYDDEDLNDEESDEDDFDSDE) the composition is skewed to acidic residues. The interval 537-588 (DDEEEDEEDEDEEDEEEDEEEEEEEEEEEEDYDDEDLNDEESDEDDFDSDED) is DEED region. Calmodulin binding regions lie at residues 589-606 (VSRF…KIYK) and 596-613 (KLLQ…RFEH). 2 disordered regions span residues 613-639 (HSRQ…SHSR) and 660-700 (LSPT…RTNI). Polar residues predominate over residues 668–691 (LSNQFHQDGGNNTTDGNLFNNFST).

Interacts with calmodulin and CBPD1 in the presence of Ca(2+).

The protein resides in the nucleus. This is Nucleomorphin (numA) from Dictyostelium discoideum (Social amoeba).